A 545-amino-acid polypeptide reads, in one-letter code: T-complex protein 1 subunit alpha (545 aa).

This sequence belongs to the TCP-1 chaperonin family. In terms of assembly, heterooligomeric complex of about 850 to 900 kDa that forms two stacked rings, 12 to 16 nm in diameter.

It localises to the cytoplasm. Functionally, molecular chaperone; assists the folding of proteins upon ATP hydrolysis. Known to play a role, in vitro, in the folding of actin and tubulin. This chain is T-complex protein 1 subunit alpha (TCP-1A), found in Schistosoma mansoni (Blood fluke).